The sequence spans 368 residues: Meiotic driver wtf23 (368 aa).

A disordered region spans residues 1-98 (MKNKYYPLRS…SSGTADNSST (98 aa)). Over residues 11–29 (SMDELSAKNDNEIDLEKGP) the composition is skewed to basic and acidic residues. Polar residues-rich tracts occupy residues 57-72 (GANNPNLFNTDESTTP) and 89-98 (SSGTADNSST). The next 7 membrane-spanning stretches (helical) occupy residues 105–124 (FLSFISIFVLNVPAVCYLTY), 139–158 (YFGVWCAICLMIFISLWYFY), 170–192 (IFLAQCIKVTVVFLAQCVKVISI), 202–221 (MIIIWLLWLIICCILFGCVK), 234–256 (STCTISAVLLLIVSSVCIPFWTF), 266–283 (VFLLQSGIVLVLNGTMFL), and 328–350 (GIAFILGGIGNAMMGLANAFRGG).

Belongs to the WTF family. Homomer. Forms protein aggregates. The two isoforms can interact with each other and with themselves. High sequence similarity is required for their interaction.

The protein localises to the spore membrane. Its subcellular location is the vacuole membrane. It localises to the ascus epiplasm. It is found in the cytoplasm. The protein resides in the endoplasmic reticulum membrane. Its function is as follows. Promotes unequal transmission of alleles from the parental zygote to progeny spores by acting as poison/antidote system where the poison and antidote proteins are produced from the same locus; the poison component is trans-acting and targets all spores within an ascus whereas the antidote component is spore-specific, leading to poisoning of all progeny that do not inherit the allele. Functionally, localizes isoform 2 to the vacuole thereby facilitating its degradation. In terms of biological role, forms toxic aggregates that disrupt spore maturation. In Schizosaccharomyces pombe (strain 972 / ATCC 24843) (Fission yeast), this protein is Meiotic driver wtf23.